The following is a 468-amino-acid chain: Elongation factor 1-alpha (468 aa).

The tr-type G domain maps to 6–244 (KPHINIVVIG…DNIPLPARPS (239 aa)). Positions 15 to 22 (GHVDSGKS) are G1. 15–22 (GHVDSGKS) lines the GTP pocket. The tract at residues 71 to 75 (GITID) is G2. Residues 92 to 95 (DAPG) form a G3 region. GTP-binding positions include 92 to 96 (DAPGH) and 154 to 157 (NKID). The interval 154–157 (NKID) is G4. Residues 195-197 (SGW) form a G5 region. 2 positions are modified to 5-glutamyl glycerylphosphorylethanolamine: Glu303 and Glu376.

Belongs to the TRAFAC class translation factor GTPase superfamily. Classic translation factor GTPase family. EF-Tu/EF-1A subfamily.

It localises to the cytoplasm. In terms of biological role, this protein promotes the GTP-dependent binding of aminoacyl-tRNA to the A-site of ribosomes during protein biosynthesis. This chain is Elongation factor 1-alpha, found in Hydra vulgaris (Hydra).